A 133-amino-acid polypeptide reads, in one-letter code: ATP synthase epsilon chain (133 aa).

This sequence belongs to the ATPase epsilon chain family. F-type ATPases have 2 components, CF(1) - the catalytic core - and CF(0) - the membrane proton channel. CF(1) has five subunits: alpha(3), beta(3), gamma(1), delta(1), epsilon(1). CF(0) has three main subunits: a, b and c.

It localises to the cell membrane. In terms of biological role, produces ATP from ADP in the presence of a proton gradient across the membrane. This chain is ATP synthase epsilon chain, found in Clostridium botulinum (strain ATCC 19397 / Type A).